The sequence spans 488 residues: Protein Notchless (488 aa).

A disordered region spans residues 1 to 22 (MLAKKQKMQETDTEQEATPHTI). A ubiquitin-like (UBL) domain region spans residues 19 to 101 (PHTIQARLVS…VIDIVYQPQA (83 aa)). WD repeat units lie at residues 117 to 156 (GHAEAVVSLNFSPDGAHLASGSGDTTVRLWDLNTETPHFT), 159 to 198 (GHKQWVLCVSWAPDGKRLASGCKAGSIIIWDPETGQQKGR), 202 to 246 (GHKK…CLMN), 249 to 287 (GHTNAVTAVRWGGAGLIYTSSKDRTVKMWRAADGILCRT), 329 to 370 (LQES…CVER), 373 to 412 (GHQNVVNDVKYSPDVKLIASASFDKSVRLWRASDGQYMAT), 415 to 454 (GHVQAVYTVAWSADSRLIVSGSKDSTLKVWSVQTKKLAQE), and 457 to 488 (GHADEVFGVDWAPDGSRVASGGKDKVIKLWAY).

It belongs to the NLE1/RSA4 family. Interacts with Notch (via cytoplasmic domain). Associates with the pre-60S ribosomal particle.

Its subcellular location is the nucleus. It is found in the nucleolus. Functionally, plays a role in regulating Notch activity. The polypeptide is Protein Notchless (Drosophila melanogaster (Fruit fly)).